Consider the following 414-residue polypeptide: Serine hydroxymethyltransferase (414 aa).

(6S)-5,6,7,8-tetrahydrofolate contacts are provided by residues leucine 121 and 125–127 (GHL). An N6-(pyridoxal phosphate)lysine modification is found at lysine 229.

The protein belongs to the SHMT family. Homodimer. Pyridoxal 5'-phosphate serves as cofactor.

It localises to the cytoplasm. The catalysed reaction is (6R)-5,10-methylene-5,6,7,8-tetrahydrofolate + glycine + H2O = (6S)-5,6,7,8-tetrahydrofolate + L-serine. It functions in the pathway one-carbon metabolism; tetrahydrofolate interconversion. Its pathway is amino-acid biosynthesis; glycine biosynthesis; glycine from L-serine: step 1/1. In terms of biological role, catalyzes the reversible interconversion of serine and glycine with tetrahydrofolate (THF) serving as the one-carbon carrier. This reaction serves as the major source of one-carbon groups required for the biosynthesis of purines, thymidylate, methionine, and other important biomolecules. Also exhibits THF-independent aldolase activity toward beta-hydroxyamino acids, producing glycine and aldehydes, via a retro-aldol mechanism. This Paracidovorax citrulli (strain AAC00-1) (Acidovorax citrulli) protein is Serine hydroxymethyltransferase.